A 389-amino-acid polypeptide reads, in one-letter code: Na(+)/H(+) antiporter NhaA (389 aa).

Transmembrane regions (helical) follow at residues 8 to 28 (INFL…ALVW), 48 to 68 (ISLH…MAAI), 91 to 111 (MATL…NALI), 119 to 139 (GWGI…RVVF), 173 to 193 (NPVA…AYLL), 214 to 234 (AGLY…VPFL), 262 to 282 (WKIF…GVEF), 288 to 308 (LTWL…FLMG), 327 to 347 (LLVA…VSGV), and 361 to 381 (GALF…VLGI).

The protein belongs to the NhaA Na(+)/H(+) (TC 2.A.33) antiporter family.

It localises to the cell membrane. The catalysed reaction is Na(+)(in) + 2 H(+)(out) = Na(+)(out) + 2 H(+)(in). Na(+)/H(+) antiporter that extrudes sodium in exchange for external protons. The sequence is that of Na(+)/H(+) antiporter NhaA from Desulfitobacterium hafniense (strain DSM 10664 / DCB-2).